The primary structure comprises 123 residues: Small ribosomal subunit protein uS12 (123 aa).

Aspartate 89 carries the post-translational modification 3-methylthioaspartic acid.

The protein belongs to the universal ribosomal protein uS12 family. As to quaternary structure, part of the 30S ribosomal subunit. Contacts proteins S8 and S17. May interact with IF1 in the 30S initiation complex.

In terms of biological role, with S4 and S5 plays an important role in translational accuracy. Its function is as follows. Interacts with and stabilizes bases of the 16S rRNA that are involved in tRNA selection in the A site and with the mRNA backbone. Located at the interface of the 30S and 50S subunits, it traverses the body of the 30S subunit contacting proteins on the other side and probably holding the rRNA structure together. The combined cluster of proteins S8, S12 and S17 appears to hold together the shoulder and platform of the 30S subunit. This Rhodopseudomonas palustris (strain BisB18) protein is Small ribosomal subunit protein uS12.